The following is a 348-amino-acid chain: Phospho-2-dehydro-3-deoxyheptonate aldolase, Trp-sensitive (348 aa).

Belongs to the class-I DAHP synthase family.

It carries out the reaction D-erythrose 4-phosphate + phosphoenolpyruvate + H2O = 7-phospho-2-dehydro-3-deoxy-D-arabino-heptonate + phosphate. It participates in metabolic intermediate biosynthesis; chorismate biosynthesis; chorismate from D-erythrose 4-phosphate and phosphoenolpyruvate: step 1/7. Functionally, stereospecific condensation of phosphoenolpyruvate (PEP) and D-erythrose-4-phosphate (E4P) giving rise to 3-deoxy-D-arabino-heptulosonate-7-phosphate (DAHP). The sequence is that of Phospho-2-dehydro-3-deoxyheptonate aldolase, Trp-sensitive (aroH) from Enterobacter agglomerans (Erwinia herbicola).